The sequence spans 285 residues: Acetyl-coenzyme A carboxylase carboxyl transferase subunit beta (285 aa).

The 263-residue stretch at 23-285 folds into the CoA carboxyltransferase N-terminal domain; sequence VFRRCDGCSH…HLTAGRRARR (263 aa). Residues C27, C30, C46, and C49 each contribute to the Zn(2+) site. A C4-type zinc finger spans residues 27–49; the sequence is CDGCSHTHDAAELARTFEVCSQC.

The protein belongs to the AccD/PCCB family. In terms of assembly, acetyl-CoA carboxylase is a heterohexamer composed of biotin carboxyl carrier protein (AccB), biotin carboxylase (AccC) and two subunits each of ACCase subunit alpha (AccA) and ACCase subunit beta (AccD). Requires Zn(2+) as cofactor.

The protein localises to the cytoplasm. The catalysed reaction is N(6)-carboxybiotinyl-L-lysyl-[protein] + acetyl-CoA = N(6)-biotinyl-L-lysyl-[protein] + malonyl-CoA. Its pathway is lipid metabolism; malonyl-CoA biosynthesis; malonyl-CoA from acetyl-CoA: step 1/1. In terms of biological role, component of the acetyl coenzyme A carboxylase (ACC) complex. Biotin carboxylase (BC) catalyzes the carboxylation of biotin on its carrier protein (BCCP) and then the CO(2) group is transferred by the transcarboxylase to acetyl-CoA to form malonyl-CoA. This chain is Acetyl-coenzyme A carboxylase carboxyl transferase subunit beta, found in Sorangium cellulosum (strain So ce56) (Polyangium cellulosum (strain So ce56)).